The sequence spans 121 residues: Putative membrane protein insertion efficiency factor (121 aa).

This sequence belongs to the UPF0161 family.

It is found in the cell inner membrane. Its function is as follows. Could be involved in insertion of integral membrane proteins into the membrane. The chain is Putative membrane protein insertion efficiency factor from Rhodopseudomonas palustris (strain HaA2).